We begin with the raw amino-acid sequence, 377 residues long: Actin depolymerising venom protein gelsolin 1 (377 aa).

An N-terminal signal peptide occupies residues 1–26; it reads MFRQMKLGSLATKLLLACFLVTCTSG. Gelsolin-like repeat units lie at residues 50 to 133, 174 to 243, and 298 to 368; these read FVPV…SEQF, IRVR…SSTS, and EKPL…PTAF.

As to expression, expressed by the venom gland (posterior main gland) (at protein level).

The protein resides in the secreted. The chain is Actin depolymerising venom protein gelsolin 1 from Platymeris rhadamanthus (Red spot assassin bug).